A 471-amino-acid chain; its full sequence is ATP synthase subunit beta, chloroplastic (471 aa).

An ATP-binding site is contributed by Gly-151 to Thr-158.

Belongs to the ATPase alpha/beta chains family. In terms of assembly, F-type ATPases have 2 components, CF(1) - the catalytic core - and CF(0) - the membrane proton channel. CF(1) has five subunits: alpha(3), beta(3), gamma(1), delta(1), epsilon(1). CF(0) has four main subunits: a(1), b(1), b'(1) and c(9-12).

It localises to the plastid. The protein resides in the chloroplast thylakoid membrane. The enzyme catalyses ATP + H2O + 4 H(+)(in) = ADP + phosphate + 5 H(+)(out). Its function is as follows. Produces ATP from ADP in the presence of a proton gradient across the membrane. The catalytic sites are hosted primarily by the beta subunits. The protein is ATP synthase subunit beta, chloroplastic of Rhodomonas salina (Cryptomonas salina).